Reading from the N-terminus, the 1187-residue chain is DNA-directed RNA polymerase subunit beta (1187 aa).

The tract at residues 1150–1187 (KDEDDDPASSADDLGFNIGARPDAAAKEDQKAEEPEYQ) is disordered. The segment covering 1173-1187 (AAAKEDQKAEEPEYQ) has biased composition (basic and acidic residues).

The protein belongs to the RNA polymerase beta chain family. The RNAP catalytic core consists of 2 alpha, 1 beta, 1 beta' and 1 omega subunit. When a sigma factor is associated with the core the holoenzyme is formed, which can initiate transcription.

The catalysed reaction is RNA(n) + a ribonucleoside 5'-triphosphate = RNA(n+1) + diphosphate. In terms of biological role, DNA-dependent RNA polymerase catalyzes the transcription of DNA into RNA using the four ribonucleoside triphosphates as substrates. This Bifidobacterium longum subsp. infantis (strain ATCC 15697 / DSM 20088 / JCM 1222 / NCTC 11817 / S12) protein is DNA-directed RNA polymerase subunit beta.